Here is a 307-residue protein sequence, read N- to C-terminus: Haloalkane dehalogenase (307 aa).

An AB hydrolase-1 domain is found at P34–G158. The Nucleophile role is filled by D106. Catalysis depends on E130, which acts as the Proton donor. Catalysis depends on H272, which acts as the Proton acceptor.

It belongs to the haloalkane dehalogenase family. Type 2 subfamily. Monomer.

The catalysed reaction is 1-haloalkane + H2O = a halide anion + a primary alcohol + H(+). The protein operates within xenobiotic degradation; 1,2-dibromoethane degradation. Its function is as follows. Catalyzes hydrolytic cleavage of carbon-halogen bonds in halogenated aliphatic compounds, leading to the formation of the corresponding primary alcohols, halide ions and protons. Has a broad substrate specificity, which includes mono- and di-chlorinated and brominated alkanes. The highest activity was found with 1,2-dibromoethane, whereas low activity was measured with the analog 1,2-dichloroethane. This Mycobacterium sp. (strain GP1) protein is Haloalkane dehalogenase (dhaAF).